Reading from the N-terminus, the 37-residue chain is Large ribosomal subunit protein bL36 (37 aa).

It belongs to the bacterial ribosomal protein bL36 family.

The polypeptide is Large ribosomal subunit protein bL36 (Pasteurella multocida (strain Pm70)).